We begin with the raw amino-acid sequence, 179 residues long: Large ribosomal subunit protein uL5 (179 aa).

Belongs to the universal ribosomal protein uL5 family. In terms of assembly, part of the 50S ribosomal subunit; part of the 5S rRNA/L5/L18/L25 subcomplex. Contacts the 5S rRNA and the P site tRNA. Forms a bridge to the 30S subunit in the 70S ribosome.

Functionally, this is one of the proteins that bind and probably mediate the attachment of the 5S RNA into the large ribosomal subunit, where it forms part of the central protuberance. In the 70S ribosome it contacts protein S13 of the 30S subunit (bridge B1b), connecting the 2 subunits; this bridge is implicated in subunit movement. Contacts the P site tRNA; the 5S rRNA and some of its associated proteins might help stabilize positioning of ribosome-bound tRNAs. The chain is Large ribosomal subunit protein uL5 from Polaromonas naphthalenivorans (strain CJ2).